The sequence spans 168 residues: MVVLGRVIGPHGIRGQIKVTPFTEHIDGLMEYPVWWLSNDEKSWQIVHPTSFSVHDSLLIITLEEYSDRTNASGLKGWLIAVPRSQLPQLSEDGKEGYYWSDLIGISVVNTQGEFIGTVAGLFETGANDVLRIQLPGGKEELIPFVDQVVRQVDMRSRQIMVDWELDY.

Positions 95–168 (KEGYYWSDLI…QIMVDWELDY (74 aa)) constitute a PRC barrel domain.

Belongs to the RimM family. As to quaternary structure, binds ribosomal protein uS19.

It is found in the cytoplasm. An accessory protein needed during the final step in the assembly of 30S ribosomal subunit, possibly for assembly of the head region. Essential for efficient processing of 16S rRNA. May be needed both before and after RbfA during the maturation of 16S rRNA. It has affinity for free ribosomal 30S subunits but not for 70S ribosomes. The chain is Ribosome maturation factor RimM from Nitrosomonas eutropha (strain DSM 101675 / C91 / Nm57).